The following is a 609-amino-acid chain: CTTNBP2 N-terminal-like protein (609 aa).

Positions 1–10 are enriched in polar residues; sequence MEQNSNSSVA. A disordered region spans residues 1–29; sequence MEQNSNSSVADTFAEAPATDADYGTENCS. Coiled coils occupy residues 182 to 264 and 303 to 370; these read RMVN…QKQI and IAEG…QQLG. Positions 556–584 are disordered; sequence PPAGARGAPPPIPTKPIVPPKREPSLSRL. The span at 563–574 shows a compositional bias: pro residues; it reads APPPIPTKPIVP. Ser-586 carries the post-translational modification Phosphoserine.

Its subcellular location is the cell projection. It is found in the lamellipodium. The protein resides in the cytoplasm. The protein localises to the cytoskeleton. It localises to the stress fiber. Functionally, regulates lamellipodial actin dynamics in a Cortactin-dependent manner and is therefore likely involved in controlling actin branch density, actin-retrograde flow rates and lamellipodial protrusion. Functions by slowing the dissociation of Cortactin from Arp2/3 nucleated branches thereby increasing branch nucleation and junction stability. Associates with core striatin-interacting phosphatase and kinase (STRIPAK) complex to form CTTNBP2NL-STRIPAK complexes. STRIPAK complexes have critical roles in protein (de)phosphorylation and are regulators of multiple signaling pathways including Hippo, MAPK, nuclear receptor and cytoskeleton remodeling. Different types of STRIPAK complexes are involved in a variety of biological processes such as cell growth, differentiation, apoptosis, metabolism and immune regulation. The sequence is that of CTTNBP2 N-terminal-like protein from Drosophila melanogaster (Fruit fly).